Reading from the N-terminus, the 416-residue chain is MEGTNNTTGWTHFDSTSNRTSKSFDEEVKLSYQVVTSFLLGALILCSIFGNACVVAAIALERSLQNVANYLIGSLAVTDLMVSVLVLPMAALYQVLNRWTLGQIPCDIFISLDMLCCTSSILHLCVIALDRYWAITEPIDYMKKRTPRRAAVLISVTWLVGFSISIPPMLIMRSQPSSMAEDRANSKQCKITQDPWYTIYSTFGAFYIPLTLMLVLYGRIFKAARFRIRRTVRKTEKKKVSDTCLALSPAMFHRKTPGDAHGKSWKRSVEPRPLPNVNGAVKHAGEGESLDIIEVQSNSRCNLPLPNTPGTVPLFENRHEKATETKRKIALARERKTVKTLGIIMGTFILCWLPFFIVALVMPFCQESCFMPHWLKDVINWLGYSNSLLNPIIYAYFNKDFQSAFKKIIKCHFCRA.

Residues methionine 1–valine 35 are Extracellular-facing. N-linked (GlcNAc...) asparagine glycans are attached at residues asparagine 5, asparagine 6, and asparagine 18. The helical transmembrane segment at threonine 36–alanine 56 threads the bilayer. At alanine 57–tyrosine 70 the chain is on the cytoplasmic side. The chain crosses the membrane as a helical span at residues leucine 71 to valine 95. Topologically, residues leucine 96–isoleucine 104 are extracellular. The helical transmembrane segment at proline 105–leucine 129 threads the bilayer. An intrachain disulfide couples cysteine 106 to cysteine 189. Serotonin contacts are provided by aspartate 113 and cysteine 117. The DRY motif; important for ligand-induced conformation changes signature appears at aspartate 130–tyrosine 132. Topologically, residues aspartate 130 to arginine 149 are cytoplasmic. The chain crosses the membrane as a helical span at residues alanine 150–isoleucine 171. The Extracellular portion of the chain corresponds to methionine 172–proline 195. A helical transmembrane segment spans residues tryptophan 196–glycine 218. Over arginine 219–threonine 340 the chain is Cytoplasmic. Residues lysine 339, threonine 340, and glycine 346 each coordinate 1D-myo-inositol 4-phosphate. The chain crosses the membrane as a helical span at residues leucine 341–phenylalanine 364. Residues cysteine 365–proline 372 are Extracellular-facing. Residues histidine 373–phenylalanine 397 form a helical membrane-spanning segment. The short motif at asparagine 390–tyrosine 394 is the NPxxY motif; important for ligand-induced conformation changes and signaling element. The 1D-myo-inositol 4-phosphate site is built by phenylalanine 397, asparagine 398, and lysine 399. Residues asparagine 398–alanine 416 lie on the Cytoplasmic side of the membrane.

This sequence belongs to the G-protein coupled receptor 1 family. 5-hydroxytryptamine receptor subfamily.

The protein resides in the cell membrane. Its activity is regulated as follows. G-protein coupled receptor activity is regulated by lipids: phosphatidylinositol 4-phosphate increases HTR1A-mediated activity. In terms of biological role, G-protein coupled receptor for 5-hydroxytryptamine (serotonin). Also functions as a receptor for various drugs and psychoactive substances. Ligand binding causes a conformation change that triggers signaling via guanine nucleotide-binding proteins (G proteins) and modulates the activity of downstream effectors, such as adenylate cyclase. HTR1A is coupled to G(i)/G(o) G alpha proteins and mediates inhibitory neurotransmission: signaling inhibits adenylate cyclase activity and activates a phosphatidylinositol-calcium second messenger system that regulates the release of Ca(2+) ions from intracellular stores. Beta-arrestin family members regulate signaling by mediating both receptor desensitization and resensitization processes. The polypeptide is 5-hydroxytryptamine receptor 1A-beta (htr1a-B) (Takifugu rubripes (Japanese pufferfish)).